Here is a 209-residue protein sequence, read N- to C-terminus: A-type ATP synthase subunit D (209 aa).

The protein belongs to the V-ATPase D subunit family. Has multiple subunits with at least A(3), B(3), C, D, E, F, H, I and proteolipid K(x).

Its subcellular location is the cell membrane. Component of the A-type ATP synthase that produces ATP from ADP in the presence of a proton gradient across the membrane. This chain is A-type ATP synthase subunit D, found in Archaeoglobus fulgidus (strain ATCC 49558 / DSM 4304 / JCM 9628 / NBRC 100126 / VC-16).